The primary structure comprises 332 residues: Cytoplasmic phosphatidylinositol transfer protein 1 (332 aa).

Residues Ser119, Ser270, and Ser274 each carry the phosphoserine modification. The span at 267 to 285 (SVRSAPSSAPSTPLSTDAP) shows a compositional bias: low complexity. The segment at 267-332 (SVRSAPSSAP…SDKPCRPKSE (66 aa)) is disordered. Thr278 bears the Phosphothreonine mark. The span at 322 to 332 (SSDKPCRPKSE) shows a compositional bias: basic and acidic residues.

This sequence belongs to the PtdIns transfer protein family. PI transfer class IIB subfamily. As to expression, ubiquitously expressed.

It is found in the cytoplasm. The catalysed reaction is a 1,2-diacyl-sn-glycero-3-phospho-(1D-myo-inositol)(in) = a 1,2-diacyl-sn-glycero-3-phospho-(1D-myo-inositol)(out). The enzyme catalyses a 1,2-diacyl-sn-glycero-3-phosphate(in) = a 1,2-diacyl-sn-glycero-3-phosphate(out). In terms of biological role, catalyzes the transfer of phosphatidylinositol (PI) and phosphatidic acid (PA) between membranes. Binds PA derived from the phospholipase D signaling pathway and among the cellular PA species, preferably binds to the C16:0/16:1 and C16:1/18:1 PA species. Catalyzes the transfer of phosphatidylinositol between membranes. The protein is Cytoplasmic phosphatidylinositol transfer protein 1 (PITPNC1) of Homo sapiens (Human).